An 87-amino-acid polypeptide reads, in one-letter code: Small ribosomal subunit protein bS20 (87 aa).

The protein belongs to the bacterial ribosomal protein bS20 family.

Functionally, binds directly to 16S ribosomal RNA. This is Small ribosomal subunit protein bS20 from Finegoldia magna (strain ATCC 29328 / DSM 20472 / WAL 2508) (Peptostreptococcus magnus).